The following is a 129-amino-acid chain: LEM domain-containing protein 1 (129 aa).

One can recognise an LEM domain in the interval 1-45 (MVDVKCLSDYELHKHLMKLGFTPGPILPSTRKTYEKKLVQLLASP). The tract at residues 45–129 (PPWKPPVMKR…RAPRTTSHGA (85 aa)) is disordered. Residues 83-97 (SLKKTTLDATRDPRA) show a composition bias toward basic and acidic residues.

This is LEM domain-containing protein 1 (Lemd1) from Mus musculus (Mouse).